We begin with the raw amino-acid sequence, 358 residues long: MTDWTDPDALDLSDGETFDSLLDRADTREKGHFFEFFAEGDELAHDPGLRLSHHGSEQWMGQTLNHDPAYWRADTAQERGFEERPVHPDYLLACVMGITVEDLSEKGGYFLGRDDVEFHQPATAGTPLSVTSTVVDTRTSSSRPKYGIVTWETEGRDRETGETLVSYRRTNMIPRREPAATDGGAVGEQDEGGPAMPDTLLSPDGERFGDFQAALDTAREENAAVAYRHERGRTMDDQLVAGLPLSTLNTARQHHNRDEMADSPSGDIVAYGDVTRSIALAHARSDEATYREQRFADERFHDFVTLGDTVYGFTRVLDCDPDAGPERAGAVTFEHVAFNQEQTPVYSGRRTAHIQRHQ.

The protein belongs to the enoyl-CoA hydratase/isomerase family. Homodimer.

It carries out the reaction (2R,3S)-beta-methylmalyl-CoA = 2-methylfumaryl-CoA + H2O. Its activity is regulated as follows. Shows highest activity at 0.5 M KCl. Does not require divalent ions for activity. In terms of biological role, involved in the methylaspartate cycle. Catalyzes the reversible hydration of mesaconyl-CoA (2-methylfumaryl-CoA) to yield beta-methylmalyl-CoA ((2R,3S)-beta-methylmalyl-CoA). Also shows activity with mesaconyl-C4-CoA (3-methylfumaryl-CoA), (S)-citramalyl-CoA and (S)-malyl-CoA. The protein is Mesaconyl-CoA hydratase of Haloarcula hispanica (strain ATCC 33960 / DSM 4426 / JCM 8911 / NBRC 102182 / NCIMB 2187 / VKM B-1755).